Reading from the N-terminus, the 339-residue chain is Dihydroorotase (339 aa).

His-12 and His-14 together coordinate Zn(2+). Substrate-binding positions include 14 to 16 (HVR) and Asn-40. Positions 94, 133, 167, and 239 each coordinate Zn(2+). The residue at position 94 (Lys-94) is an N6-carboxylysine. Residue His-133 coordinates substrate. Asp-239 is an active-site residue. Substrate contacts are provided by His-243 and Ala-255.

It belongs to the metallo-dependent hydrolases superfamily. DHOase family. Class II DHOase subfamily. In terms of assembly, homodimer. The cofactor is Zn(2+).

The enzyme catalyses (S)-dihydroorotate + H2O = N-carbamoyl-L-aspartate + H(+). It participates in pyrimidine metabolism; UMP biosynthesis via de novo pathway; (S)-dihydroorotate from bicarbonate: step 3/3. Its function is as follows. Catalyzes the reversible cyclization of carbamoyl aspartate to dihydroorotate. This is Dihydroorotase from Helicobacter acinonychis (strain Sheeba).